Reading from the N-terminus, the 476-residue chain is Cytochrome P450 monooxygenase ppzE (476 aa).

Cysteine 452 lines the heme pocket.

This sequence belongs to the cytochrome P450 family. It depends on heme as a cofactor.

It participates in secondary metabolite biosynthesis. Functionally, cytochrome P450 monooxygenase; part of the gene cluster that mediates the biosynthesis of pyrrolopyrazines, secondary metabolites showing insecticidal activity. The role of ppzE within the pathway has still to be determined. The single multifunctional NRPS ppzA is sufficient to produce peramine via condensation of 1-pyrroline-5-carboxylate and arginine, N-methylation of the alpha-amino group of arginine and reduction of the thioester and the cyclization to form an iminium ion resulting in release from the peptide synthetase. Deprotonation of this intermediate and oxidation of the pyrroline ring would give rise to peramine. In Epichloe species that produce only peramine, the peramine synthetase gene is not localized in a gene cluster, in contrast to Metarhizium species that contain additional pyrrolopyrazine biosynthesis genes. The 2-oxoglutarate-Fe(II) type oxidoreductase ppzC hydroxylates peramine to yield the newly identified compound 8-hydroxyperamine whereas ppzD converts L-proline into trans-4-hydroxy-L-proline, a precursor of peramine biosynthesis. In Metarhizium majus (strain ARSEF 297), this protein is Cytochrome P450 monooxygenase ppzE.